Consider the following 147-residue polypeptide: Spermidine export protein MdtJ (147 aa).

Helical transmembrane passes span 1-21, 31-51, 54-74, and 81-101; these read MIYWIFLGLAIIAEIIGTLSM, TGHIVMYFMITGSYVMLSLAV, VALGVAYALWEGIGILIITIF, and ETLSPLKIAGLVTLIGGILLV. Basic residues predominate over residues 105–117; sequence TRKPKQPNRHRGN. A disordered region spans residues 105-147; that stretch reads TRKPKQPNRHRGNRPPSVQGLKTQTTGHHKGVAVESGEHHAAA.

Belongs to the drug/metabolite transporter (DMT) superfamily. Small multidrug resistance (SMR) (TC 2.A.7.1) family. MdtJ subfamily. Forms a complex with MdtI.

Its subcellular location is the cell inner membrane. Its function is as follows. Catalyzes the excretion of spermidine. In Yersinia pseudotuberculosis serotype O:3 (strain YPIII), this protein is Spermidine export protein MdtJ.